The chain runs to 433 residues: Homogentisate 1,2-dioxygenase (433 aa).

His-288 serves as the catalytic Proton acceptor. His-331 and Glu-337 together coordinate Fe cation. Residues Tyr-346 and His-367 each contribute to the homogentisate site. Position 367 (His-367) interacts with Fe cation.

It belongs to the homogentisate dioxygenase family. As to quaternary structure, hexamer; dimer of trimers. Fe cation is required as a cofactor.

The enzyme catalyses homogentisate + O2 = 4-maleylacetoacetate + H(+). Its pathway is amino-acid degradation; L-phenylalanine degradation; acetoacetate and fumarate from L-phenylalanine: step 4/6. Involved in the catabolism of homogentisate (2,5-dihydroxyphenylacetate or 2,5-OH-PhAc), a central intermediate in the degradation of phenylalanine and tyrosine. Catalyzes the oxidative ring cleavage of the aromatic ring of homogentisate to yield maleylacetoacetate. The sequence is that of Homogentisate 1,2-dioxygenase from Pseudomonas putida (strain GB-1).